The sequence spans 486 residues: Putative protease Do-like 13 (486 aa).

The serine protease stretch occupies residues 44 to 229 (KINTFSSKPN…IPAPVVKHFI (186 aa)). Catalysis depends on charge relay system residues histidine 83, aspartate 114, and serine 192. In terms of domain architecture, PDZ spans 241–334 (FCSLNLSYQH…TILLKILREG (94 aa)).

The protein belongs to the peptidase S1C family.

Its function is as follows. Putative serine protease. The polypeptide is Putative protease Do-like 13 (DEGP13) (Arabidopsis thaliana (Mouse-ear cress)).